The primary structure comprises 3295 residues: Toxin CdiA (3295 aa).

The tract at residues 33–366 (PSSGVGHTQR…GKGNTQLTTA (334 aa)) is two-partner system transport domain (TPS). Residues 55 to 75 (LLIALGCISLSAQAAIVADGS) traverse the membrane as a helical segment. Residues 353–1574 (GVLYGKGNTQ…LLVYAKTLTN (1222 aa)) form an FHA-1 region. The interval 1165–1185 (PPSSIPPSSTQSSSTQASASP) is disordered. The receptor binding domain (RBD) stretch occupies residues 1575-1796 (RRQILTATTD…LKTDKGDYAP (222 aa)). Residues 1797-1977 (GPEAALSLAN…GVKPGDLRAN (181 aa)) form a YP domain region. The segment at 1806-1831 (NISPPSSLDATGPRGVPPPSDDLNRT) is disordered. The periplasmic FHA-1 repeat (pFR) stretch occupies residues 1998-2035 (GAISASNNLQISMAKDITLNNRCGLLQAGNHLQLSTLN). The interval 2022–2676 (LLQAGNHLQL…DRDNYDAKQS (655 aa)) is FHA-2. Disordered stretches follow at residues 2260 to 2292 (TSQTEQHDEQRNHTGTKKGLLSSTTTRSEEGRS) and 2823 to 2847 (QQNVDDLSRDTGNANGSIGPIFDKE). The span at 2823 to 2838 (QQNVDDLSRDTGNANG) shows a compositional bias: polar residues. A VENN CT cleavage motif motif is present at residues 3073–3076 (VENN). The CT domain stretch occupies residues 3073–3295 (VENNLLGGNE…QKKDAMEDSK (223 aa)). A disordered region spans residues 3276–3295 (SSEFGSSLIQQKKDAMEDSK). Positions 3286–3295 (QKKDAMEDSK) are enriched in basic and acidic residues.

In the N-terminal section; belongs to the CdiA toxin family. In terms of assembly, probably interacts with cognate immunity protein CdiI.

It localises to the membrane. The protein localises to the target cell. It is found in the target cell cytoplasm. In terms of biological role, toxic component of a toxin-immunity protein module, which functions as a cellular contact-dependent growth inhibition (CDI) system. CDI modules allow bacteria to communicate with and inhibit the growth of closely related neighboring bacteria in a contact-dependent fashion. CDI is neutralized by its cognate immunity protein CdiI, but not by non-cognate CdiI from other bacteria. Its function is as follows. The CdiA protein is thought to be exported from the cell through the central lumen of CdiB, the other half of its two-partner system (TPS). The TPS domain probably remains associated with CdiB while the FHA-1 domain forms an extended filament with the receptor-binding domain (RBD) at its extremity; in the secretion arrested state the C-terminus of the RBD and YP domains form a hairpin-like structure as the FHA-2, PT and CT domains are periplasmic. The YP domain is probably responsible for this arrest at the point where it re-enters the host cell periplasm. Upon binding to a target cell outer membrane receptor a signal is transmitted to activate secretion. The filament elongates slightly, the rest of CdiA is secreted and the FHA-2 domain becomes stably associated with the target cell's outer membrane where it facilitates entry of the toxic CT domain into the target cell periplasm. From there the toxic CT domain is cleaved and gains access to the target cell cytoplasm via an inner membrane protein. This Yersinia pestis protein is Toxin CdiA.